A 425-amino-acid polypeptide reads, in one-letter code: Serine--tRNA ligase (425 aa).

Residues Thr41–Thr70 are disordered. Positions Ser44–Gly54 are enriched in polar residues. The span at Val57–Thr70 shows a compositional bias: basic and acidic residues. An L-serine-binding site is contributed by Thr234 to Glu236. Arg265–Glu267 contacts ATP. Glu288 lines the L-serine pocket. Residue Glu352–Ser355 participates in ATP binding. Position 388 (Ser388) interacts with L-serine.

This sequence belongs to the class-II aminoacyl-tRNA synthetase family. Type-1 seryl-tRNA synthetase subfamily. In terms of assembly, homodimer. The tRNA molecule binds across the dimer.

It is found in the cytoplasm. It catalyses the reaction tRNA(Ser) + L-serine + ATP = L-seryl-tRNA(Ser) + AMP + diphosphate + H(+). The catalysed reaction is tRNA(Sec) + L-serine + ATP = L-seryl-tRNA(Sec) + AMP + diphosphate + H(+). Its pathway is aminoacyl-tRNA biosynthesis; selenocysteinyl-tRNA(Sec) biosynthesis; L-seryl-tRNA(Sec) from L-serine and tRNA(Sec): step 1/1. Its function is as follows. Catalyzes the attachment of serine to tRNA(Ser). Is also able to aminoacylate tRNA(Sec) with serine, to form the misacylated tRNA L-seryl-tRNA(Sec), which will be further converted into selenocysteinyl-tRNA(Sec). This chain is Serine--tRNA ligase, found in Trichodesmium erythraeum (strain IMS101).